Reading from the N-terminus, the 171-residue chain is Small ribosomal subunit protein uS13 (171 aa).

2 disordered regions span residues 1–22 (MGKA…AAKK) and 142–171 (RHEK…RKKE). A compositionally biased stretch (basic and acidic residues) spans 10 to 22 (KSDKEAAKPAAKK). The span at 142 to 158 (RHEKGKKVRGQRTRSNG) shows a compositional bias: basic residues.

The protein belongs to the universal ribosomal protein uS13 family. Part of the 30S ribosomal subunit. Forms a loose heterodimer with protein S19. Forms two bridges to the 50S subunit in the 70S ribosome.

In terms of biological role, located at the top of the head of the 30S subunit, it contacts several helices of the 16S rRNA. In the 70S ribosome it contacts the 23S rRNA (bridge B1a) and protein L5 of the 50S subunit (bridge B1b), connecting the 2 subunits; these bridges are implicated in subunit movement. The polypeptide is Small ribosomal subunit protein uS13 (Thermoplasma volcanium (strain ATCC 51530 / DSM 4299 / JCM 9571 / NBRC 15438 / GSS1)).